The chain runs to 379 residues: MVADTKLYDCLEVRPEASEAELKKAYRKLALKYHPDKNPNGEKKFKEISLAYEVLSDPQRRKLYDQYGITEGNAAPPPPGAEGGPGAGFGGFPGAGPGGARTFHFNMGGPGGAQFFSASDPNDIFERVFGHAFAGGGGMGGGMGGMGGMDDDMDMDGGFGTRTRGGGMPGGFANMFGGGGAGPHARRSHPSFGGSRPSQPPAQNEVITRPLNVSLEDLFTGCTKKMKISRHIIDASGQSVKADRILEIKVKPGWKAGTKIKFAGEGDEKPDGTVQDIQFVLAEKPHPVFTRSGDDLRMQVELSLKEALLGFSKQISTIDGKKLKVSSSLPTQPGYEITYPGFGMPLPKNPSQRGNMIIECKVKFPTELTPAQKTAAEAF.

The 70-residue stretch at 1-70 (MVADTKLYDC…RKLYDQYGIT (70 aa)) folds into the J domain. Disordered stretches follow at residues 69–95 (ITEG…FPGA) and 176–205 (FGGG…AQNE). The segment covering 81-95 (AEGGPGAGFGGFPGA) has biased composition (gly residues).

Its function is as follows. Required for nuclear migration during mitosis. It is required for the normal initiation of translation. This is Protein psi1 (psi1) from Schizosaccharomyces pombe (strain 972 / ATCC 24843) (Fission yeast).